Here is a 215-residue protein sequence, read N- to C-terminus: uncharacterized protein (215 aa).

6 consecutive transmembrane segments (helical) span residues 21-40 (IIKYIVIFFLFYIISTVLIN), 50-69 (LIFSVICLLISLISFSTIIF), 95-117 (FVAIFICTTVGLIFVLPVIYVFF), 122-144 (LEIALFFISVWMIFVLSSSLVVL), 157-179 (NFVGTFIMPLLIPNIIMTGLILQ), and 185-207 (LIFIMIGINLIFLPVSFCLSAYL).

The protein belongs to the CcmB/CycW/HelB family.

The protein localises to the cell membrane. This is an uncharacterized protein from Rickettsia prowazekii (strain Madrid E).